We begin with the raw amino-acid sequence, 165 residues long: Calcium-binding protein H (165 aa).

4 EF-hand domains span residues 7–42 (QIEK…MGSK), 43–78 (YPEK…RYQD), 88–123 (YFQD…IGSD), and 124–159 (HPKE…TIRS). D20, D22, N24, E26, E31, D56, D58, E60, K62, E67, D101, N103, D105, R107, E112, D137, N139, D141, Y143, and E148 together coordinate Ca(2+).

This chain is Calcium-binding protein H (cbpH), found in Dictyostelium discoideum (Social amoeba).